Consider the following 949-residue polypeptide: ATPase 5, plasma membrane-type (949 aa).

Serine 2 is modified (N-acetylserine). At 2–61 the chain is on the cytoplasmic side; sequence SELDHIKNESVDLVRIPMEEVFEELKCTKQGLTANEASHRLDVFGPNKLEEKKESKLLKF. Residues 62–81 traverse the membrane as a helical segment; sequence LGFMWNPLSWVMEVAALMAI. Over 82 to 93 the chain is Extracellular; sequence ALANGGGRPPDW. A helical transmembrane segment spans residues 94–114; sequence QDFVGIVCLLLINSTISFIEE. Residues 115 to 243 lie on the Cytoplasmic side of the membrane; that stretch reads NNAGNAAAAL…GHFQKVLTSI (129 aa). Residues 244-264 form a helical membrane-spanning segment; the sequence is GNFCICSIALGIIVELLVMYP. Residues 265 to 273 are Extracellular-facing; that stretch reads IQRRRYRDG. The chain crosses the membrane as a helical span at residues 274 to 291; sequence IDNLLVLLIGGIPIAMPS. Over 292–643 the chain is Cytoplasmic; it reads VLSVTMATGS…TSRAIFQRMK (352 aa). Residue aspartate 329 is the 4-aspartylphosphate intermediate of the active site. Mg(2+) is bound by residues aspartate 588 and aspartate 592. A helical transmembrane segment spans residues 644–665; the sequence is NYTIYAVSITIRIVFGFMFIAL. Over 666–670 the chain is Extracellular; it reads IWQFD. The chain crosses the membrane as a helical span at residues 671–693; sequence FSPFMVLIIAILNDGTIMTISKD. At 694–709 the chain is on the cytoplasmic side; it reads RMKPSPQPDSWKLRDI. A helical membrane pass occupies residues 710–730; that stretch reads FSTGVVLGGYQALMTVVFFWV. The Extracellular portion of the chain corresponds to 731 to 751; sequence MKDSDFFSNYFGVRPLSQRPE. A helical membrane pass occupies residues 752–772; it reads QMMAALYLQVSIISQALIFVT. Over 773 to 784 the chain is Cytoplasmic; the sequence is RSRSWSYAECPG. A helical membrane pass occupies residues 785 to 805; sequence LLLLGAFVIAQLVATFIAVYA. Over 806-813 the chain is Extracellular; it reads NWSFARIE. A helical membrane pass occupies residues 814–834; the sequence is GAGWGWAGVIWLYSFLTYIPL. The Cytoplasmic segment spans residues 835 to 949; it reads DLLKFGIRYV…IDTIQQHYTV (115 aa). Threonine 881 carries the post-translational modification Phosphothreonine. Phosphoserine is present on residues serine 899 and serine 931. The tract at residues 947–949 is interaction with 14-3-3 proteins; it reads YTV. At threonine 948 the chain carries Phosphothreonine.

The protein belongs to the cation transport ATPase (P-type) (TC 3.A.3) family. Type IIIA subfamily. As to quaternary structure, binds to 14-3-3 proteins. The binding is induced by phosphorylation of Thr-948. Binding to 14-3-3 proteins activates the H(+)-ATPase. In terms of tissue distribution, expressed in guard cells and leaves.

The protein resides in the membrane. It carries out the reaction ATP + H2O + H(+)(in) = ADP + phosphate + 2 H(+)(out). Functionally, the plasma membrane H(+) ATPase of plants and fungi generates a proton gradient that drives the active transport of nutrients by H(+)-symport. The resulting external acidification and/or internal alkinization may mediate growth responses. The polypeptide is ATPase 5, plasma membrane-type (AHA5) (Arabidopsis thaliana (Mouse-ear cress)).